Consider the following 469-residue polypeptide: MVNRIWEKRFWISCFFIIFLFILVIFQVMVELGRFEKKETKSSTVINIQKQKKPLLKEQSNSRLRHFKDNYPIMLWWSPLTGENGRLGQCGTDTCFFTINRTYLQDPMTKAILFYGTDFNIDSLPLPRKSSHEWALFHEESPKNNYKLFHEPAITLFNHTATFSRHSHMPLTSQYLEGLQALKSTDYLVSVEKKNVLRKRLSPLAYVQSDCDPPSDRDTYVQELMKYIAVDSYGECLHNKDLPQQVNNPSFMDDSQFHHILGQYKFILAFENAVCEDYITEKLWRPLKLGAVPVYFGAPNVEDWLPSNKSAIIVSRFSHPKDLAAYIKKLDKNDTLYMQFIEWKLHGNINNKRLVSAITERKWGVQDVTQDNYIDAFECMVCKRVCENVRLKEQGPSTKLWNADSAHLNCPAPEVFSFLPVHSPKSSMREMWKPSFEQSKKEAKALRTLVERNRNFTTVEFWNLVFKFW.

Residues 1 to 9 lie on the Cytoplasmic side of the membrane; sequence MVNRIWEKR. The chain crosses the membrane as a helical; Signal-anchor for type II membrane protein span at residues 10–30; sequence FWISCFFIIFLFILVIFQVMV. At 31–469 the chain is on the lumenal side; that stretch reads ELGRFEKKET…EFWNLVFKFW (439 aa). Asn100, Asn158, Asn308, and Asn333 each carry an N-linked (GlcNAc...) asparagine glycan. Cys379 and Cys382 are joined by a disulfide. Asn455 is a glycosylation site (N-linked (GlcNAc...) asparagine).

The protein belongs to the glycosyltransferase 10 family.

It is found in the endoplasmic reticulum membrane. It catalyses the reaction L-threonyl-[protein] + GDP-beta-L-fucose = 3-O-(alpha-L-fucosyl)-L-threonyl-[protein] + GDP + H(+). The enzyme catalyses L-seryl-[protein] + GDP-beta-L-fucose = 3-O-(alpha-L-fucosyl)-L-seryl-[protein] + GDP + H(+). The protein operates within protein modification; protein glycosylation. In terms of biological role, protein O-fucosyltransferase that specifically catalyzes O-fucosylation of serine or threonine residues in EMI domains of target proteins. Attaches fucose through an O-glycosidic linkage. O-fucosylation of EMI domain-containing proteins may be required for facilitating protein folding and secretion. This chain is GDP-fucose protein O-fucosyltransferase 3 (fut10), found in Xenopus laevis (African clawed frog).